The primary structure comprises 558 residues: Membrane protein insertase YidC (558 aa).

The next 5 membrane-spanning stretches (helical) occupy residues 6 to 26 (SFFIIVFLIVSFILWKIWDDE), 359 to 379 (FIHTYTIDNWGISIILITVII), 434 to 454 (LGGCLPLLIQMPIFLALYYML), 480 to 500 (ILPIIMGITMFFIQKLSPTTI), and 513 to 533 (LVIFTIFFLWFPSGLVLYYII).

It belongs to the OXA1/ALB3/YidC family. Type 1 subfamily. In terms of assembly, interacts with the Sec translocase complex via SecD. Specifically interacts with transmembrane segments of nascent integral membrane proteins during membrane integration.

The protein resides in the cell inner membrane. Required for the insertion and/or proper folding and/or complex formation of integral membrane proteins into the membrane. Involved in integration of membrane proteins that insert both dependently and independently of the Sec translocase complex, as well as at least some lipoproteins. Aids folding of multispanning membrane proteins. The polypeptide is Membrane protein insertase YidC (Blochmanniella floridana).